A 182-amino-acid chain; its full sequence is Probable RNA 2'-phosphotransferase (182 aa).

This sequence belongs to the KptA/TPT1 family.

Functionally, removes the 2'-phosphate from RNA via an intermediate in which the phosphate is ADP-ribosylated by NAD followed by a presumed transesterification to release the RNA and generate ADP-ribose 1''-2''-cyclic phosphate (APPR&gt;P). May function as an ADP-ribosylase. The polypeptide is Probable RNA 2'-phosphotransferase (Herpetosiphon aurantiacus (strain ATCC 23779 / DSM 785 / 114-95)).